Reading from the N-terminus, the 266-residue chain is Integral membrane protein 2B (266 aa).

Residues 1–54 (MVKVTFNSALAQKEAKKDEPKSGEEALIIPPDAVAVDCKDPDDVVPVGQRRAWC) are Cytoplasmic-facing. The chain crosses the membrane as a helical; Signal-anchor for type II membrane protein span at residues 55-75 (WCMCFGLAFMLAGVILGGAYL). The Lumenal segment spans residues 76-266 (YKYFALQPDD…KFAVETLICS (191 aa)). The necessary for interaction with APP and inhibitor effects on APP processing stretch occupies residues 102 to 134 (EPSADAPAALYQTIEENIKIFEEEEVEFISVPV). Residues 137 to 231 (FADSDPANIV…LCHDKETYKL (95 aa)) form the BRICHOS domain. Cystine bridges form between C164-C223 and C248-C265. Residue N170 is glycosylated (N-linked (GlcNAc...) asparagine).

It belongs to the ITM2 family. Homodimer; disulfide-linked. Interacts with SPPL2A and SPPL2B. Interacts with APP. Mature BRI2 (mBRI2) interacts with the APP amyloid-beta A4 protein; the interaction occurs at the cell surface and in the endocytic compartments and enable alpha- and beta-secretase-induced APP cleavage inhibition. Mature BRI2 (mBRI2) interacts with the APP C99; the interaction occurs in the endocytic compartments and enable gamma-secretase-induced C99 cleavage inhibition. May form heterodimers with Bri23 peptide and APP amyloid-beta protein 40. Interacts with ADAM7 in sperm; the interaction increases following capacitation. In terms of processing, the ectodomain C-terminal part of the imBRI2 is processed by furin producing a secreted Bri23 peptide and a mature BRI2, membrane form (mBRI2). The remaining part of the ectodomain of mBRI2 containing the BRICHOS domain is cleaved by ADAM10 and is secreted (BRI2C, soluble form). The membrane-bound N-terminal fragment (BRI2C, membrane form) is further proteolytically processed by SPPL2A and SPPL2B through regulated intramembrane proteolysis producing a secreted C-peptide and a BRI2 intracellular domain (BRI2 ICD) released in the cytosol. Shedding by ADAM10 facilitates intramembrane cleavage but is not absolutely required for BRI2 ICD generation. Glycosylation at Asn-170 is important for cell surface localization, but doesn't affect furin- and ADAM10-induced proteolytic processing. In terms of tissue distribution, ubiquitous. Expressed in brain.

The protein resides in the golgi apparatus membrane. The protein localises to the cell membrane. Its subcellular location is the endosome membrane. It is found in the secreted. Functionally, plays a regulatory role in the processing of the amyloid-beta A4 precursor protein (APP) and acts as an inhibitor of the amyloid-beta peptide aggregation and fibrils deposition. Plays a role in the induction of neurite outgrowth. Functions as a protease inhibitor by blocking access of secretases to APP cleavage sites. Its function is as follows. Mature BRI2 (mBRI2) functions as a modulator of the amyloid-beta A4 precursor protein (APP) processing leading to a strong reduction in the secretion of secretase-processed amyloid-beta protein 40 and amyloid-beta protein 42. In terms of biological role, bri23 peptide prevents aggregation of APP amyloid-beta protein 42 into toxic oligomers. In Homo sapiens (Human), this protein is Integral membrane protein 2B (ITM2B).